The sequence spans 211 residues: Large ribosomal subunit protein uL3 (211 aa).

This sequence belongs to the universal ribosomal protein uL3 family. In terms of assembly, part of the 50S ribosomal subunit. Forms a cluster with proteins L14 and L19.

Its function is as follows. One of the primary rRNA binding proteins, it binds directly near the 3'-end of the 23S rRNA, where it nucleates assembly of the 50S subunit. This is Large ribosomal subunit protein uL3 from Desulfatibacillum aliphaticivorans.